The chain runs to 378 residues: GTPase Obg (378 aa).

Positions 1–159 constitute an Obg domain; it reads MKFVDEATIE…RRLRLELKVL (159 aa). The OBG-type G domain maps to 160 to 336; sequence ADVGLLGLPN…LIWALQDYLD (177 aa). Residues 166 to 173, 191 to 195, 213 to 216, 288 to 291, and 317 to 319 each bind GTP; these read GLPNAGKS, FTTLH, DIPG, NKLD, and SGL. 2 residues coordinate Mg(2+): S173 and T193. The interval 345-378 is disordered; that stretch reads AQDQADGTYVAEDPRFDATRSDAAPPGAPRGGDE.

Belongs to the TRAFAC class OBG-HflX-like GTPase superfamily. OBG GTPase family. In terms of assembly, monomer. It depends on Mg(2+) as a cofactor.

Its subcellular location is the cytoplasm. Functionally, an essential GTPase which binds GTP, GDP and possibly (p)ppGpp with moderate affinity, with high nucleotide exchange rates and a fairly low GTP hydrolysis rate. Plays a role in control of the cell cycle, stress response, ribosome biogenesis and in those bacteria that undergo differentiation, in morphogenesis control. The polypeptide is GTPase Obg (Bordetella petrii (strain ATCC BAA-461 / DSM 12804 / CCUG 43448)).